The following is a 67-amino-acid chain: Large ribosomal subunit protein uL29 (67 aa).

This sequence belongs to the universal ribosomal protein uL29 family.

In Desulfitobacterium hafniense (strain Y51), this protein is Large ribosomal subunit protein uL29.